Reading from the N-terminus, the 326-residue chain is D-allose transport system permease protein AlsC (326 aa).

Residues 1–18 (MGFTTRVKSEASEKKPFN) are Cytoplasmic-facing. The chain crosses the membrane as a helical span at residues 19-39 (FALFWDKYGTFFILAIIVAIF). Topologically, residues 40–70 (GSLSPEYFLTTNNITQIFVQSSVTVLIGMGE) are periplasmic. The chain crosses the membrane as a helical span at residues 71–91 (FFAILVAGIDLSVGAILALSG). Residues 92–101 (MVTAKLMLAG) are Cytoplasmic-facing. The helical transmembrane segment at 102 to 122 (VDPFLAAMIGGVLVGGALGAI) threads the bilayer. Residues 123–124 (NG) are Periplasmic-facing. Residues 125 to 145 (CLVNWTGLHPFIITLGTNAIF) form a helical membrane-spanning segment. The Cytoplasmic segment spans residues 146–149 (RGIT). A helical transmembrane segment spans residues 150-170 (LVISDANSVYGFSFDFVNFFA). Over 171–172 (AS) the chain is Periplasmic. A helical membrane pass occupies residues 173-193 (VIGIPVPVIFSLIVALILWFL). The Cytoplasmic segment spans residues 194–221 (TTRMRLGRNIYALGGNKNSAFYSGIDVK). A helical membrane pass occupies residues 222 to 242 (FHILVVFIISGVCAGLAGVVS). Over 243–252 (TARLGAAEPL) the chain is Periplasmic. Residues 253-273 (AGMGFETYAIASAIIGGTSFF) traverse the membrane as a helical segment. The Cytoplasmic segment spans residues 274 to 278 (GGKGR). Transmembrane regions (helical) follow at residues 279–299 (IFSV…LNIL) and 300–320 (QVQT…AVAL). Topologically, residues 321–326 (DRLISK) are cytoplasmic.

Belongs to the binding-protein-dependent transport system permease family. AraH/RbsC subfamily.

The protein localises to the cell inner membrane. Functionally, part of the binding-protein-dependent transport system AlsBAC for D-allose; probably responsible for the translocation of the substrate across the membrane. This Escherichia coli (strain K12) protein is D-allose transport system permease protein AlsC (alsC).